Reading from the N-terminus, the 960-residue chain is Dynamin-like GTPase OPA1, mitochondrial (960 aa).

A mitochondrion-targeting transit peptide spans Met-1–Asn-87. Residues Phe-88–Arg-96 are Mitochondrial matrix-facing. The helical transmembrane segment at Leu-97 to Tyr-113 threads the bilayer. At Thr-114–Asp-770 the chain is on the mitochondrial intermembrane side. The stretch at Ser-210–Gly-254 forms a coiled coil. The LQQQIQ motif motif lies at Gln-217–Leu-222. The residue at position 228 (Lys-228) is an N6-acetyllysine. Residues Gln-285–Glu-561 form the Dynamin-type G domain. Residues Gly-295 to Thr-302 are G1 motif. GTP is bound by residues Ser-298, Gly-300, Lys-301, Thr-302, Ser-303, and Gly-317. Thr-302 provides a ligand contact to Mg(2+). The interval Met-321–Arg-324 is G2 motif. 2 residues coordinate Mg(2+): Thr-323 and Asp-398. The segment at Asp-398–Gly-401 is G3 motif. The G4 motif stretch occupies residues Thr-467 to Asp-470. Lys-468, Asp-470, and Thr-503 together coordinate GTP. Residues Val-501 to Gly-504 are G5 motif. Stalk region regions lie at residues Asp-589–Thr-836 and Cys-874–Leu-928. The interval Ser-736–Cys-856 is paddle region. An intramembrane segment occupies Trp-771–Arg-781. The Mitochondrial intermembrane segment spans residues Thr-782 to Lys-960. An intrachain disulfide couples Cys-856 to Cys-874. The stretch at Arg-895–Lys-960 forms a coiled coil.

This sequence belongs to the TRAFAC class dynamin-like GTPase superfamily. Dynamin/Fzo/YdjA family. Oligomeric complex consisting of membrane-bound and soluble forms of OPA1. Interacts with RCC1L; RCC1L acts as a guanine nucleotide exchange factor (GEF) for OPA1 by exchanging bound GDP for free GTP. Interacts with CHCHD3 and IMMT; these interactions occur preferentially with soluble OPA1 forms. Interacts with PRELID1. Cleaved by OMA1 or YME1L downstream of the transmembrane region in response to different signals to generate soluble forms. Cleaved by OMA1 at position S1 following stress conditions, generating the short soluble form (Dynamin-like GTPase OPA1, short form; S-OPA1). AFG3L2 is involved in the regulation of OMA1-dependent processing of OPA1. PARL-dependent proteolytic processing releases an antiapoptotic soluble form not required for mitochondrial fusion. Post-translationally, cleavage at position S2 by YME1L is required to mediate oxidative phosphorylation (OXPHOS)-induced mitochondrial fusion. Cleavage occurs in the sequence motif Leu-Gln-Gln-Gln-Ile-Gln (LQQQIQ). In terms of processing, cleavage at position S3 by YME1L is required for membrane tubulation. As to expression, detected in brain (at protein level). Detected in brain, brain stem, heart, kidney, liver and skeletal muscle.

It localises to the mitochondrion inner membrane. Its subcellular location is the mitochondrion intermembrane space. It catalyses the reaction GTP + H2O = GDP + phosphate + H(+). With respect to regulation, activated by guanine nucleotide exchange factor RCC1L. Its function is as follows. Dynamin-related GTPase that is essential for normal mitochondrial morphology by mediating fusion of the mitochondrial inner membranes, regulating cristae morphology and maintaining respiratory chain function. Exists in two forms: the transmembrane, long form (Dynamin-like GTPase OPA1, long form; L-OPA1), which is tethered to the inner mitochondrial membrane, and the short soluble form (Dynamin-like GTPase OPA1, short form; S-OPA1), which results from proteolytic cleavage and localizes in the intermembrane space. Both forms (L-OPA1 and S-OPA1) cooperate to catalyze the fusion of the mitochondrial inner membrane. The equilibrium between L-OPA1 and S-OPA1 is essential: excess levels of S-OPA1, produced by cleavage by OMA1 following loss of mitochondrial membrane potential, lead to an impaired equilibrium between L-OPA1 and S-OPA1, inhibiting mitochondrial fusion. The balance between L-OPA1 and S-OPA1 also influences cristae shape and morphology. Involved in remodeling cristae and the release of cytochrome c during apoptosis. Proteolytic processing by PARL in response to intrinsic apoptotic signals may lead to disassembly of OPA1 oligomers and release of the caspase activator cytochrome C (CYCS) into the mitochondrial intermembrane space. Acts as a regulator of T-helper Th17 cells, which are characterized by cells with fused mitochondria with tight cristae, by mediating mitochondrial membrane remodeling: OPA1 is required for interleukin-17 (IL-17) production. Its role in mitochondrial morphology is required for mitochondrial genome maintenance. In terms of biological role, constitutes the transmembrane long form (L-OPA1) that plays a central role in mitochondrial inner membrane fusion and cristae morphology. L-OPA1 and the soluble short form (S-OPA1) form higher-order helical assemblies that coordinate the fusion of mitochondrial inner membranes. Inner membrane-anchored L-OPA1 molecules initiate membrane remodeling by recruiting soluble S-OPA1 to rapidly polymerize into a flexible cylindrical scaffold encaging the mitochondrial inner membrane. Once at the membrane surface, the formation of S-OPA1 helices induce bilayer curvature. OPA1 dimerization through the paddle region, which inserts into cardiolipin-containing membrane, promotes GTP hydrolysis and the helical assembly of a flexible OPA1 lattice on the membrane, which drives membrane curvature and mitochondrial fusion. Plays a role in the maintenance and remodeling of mitochondrial cristae, some invaginations of the mitochondrial inner membrane that provide an increase in the surface area. Probably acts by forming helical filaments at the inside of inner membrane tubes with the shape and dimensions of crista junctions. The equilibrium between L-OPA1 and S-OPA1 influences cristae shape and morphology: increased L-OPA1 levels promote cristae stacking and elongated mitochondria, while increased S-OPA1 levels correlated with irregular cristae packing and round mitochondria shape. Constitutes the soluble short form (S-OPA1) generated by cleavage by OMA1, which plays a central role in mitochondrial inner membrane fusion and cristae morphology. The transmembrane long form (L-OPA1) and the S-OPA1 form higher-order helical assemblies that coordinate the fusion of mitochondrial inner membranes. Inner membrane-anchored L-OPA1 molecules initiate membrane remodeling by recruiting soluble S-OPA1 to rapidly polymerize into a flexible cylindrical scaffold encaging the mitochondrial inner membrane. Once at the membrane surface, the formation of S-OPA1 helices induce bilayer curvature. OPA1 dimerization through the paddle region, which inserts into cardiolipin-containing membrane, promotes GTP hydrolysis and the helical assembly of a flexible OPA1 lattice on the membrane, which drives membrane curvature and mitochondrial fusion. Excess levels of S-OPA1 produced by cleavage by OMA1 following stress conditions that induce loss of mitochondrial membrane potential, lead to an impaired equilibrium between L-OPA1 and S-OPA1, thereby inhibiting mitochondrial fusion. Involved in mitochondrial safeguard in response to transient mitochondrial membrane depolarization by mediating flickering: cleavage by OMA1 leads to excess production of S-OPA1, preventing mitochondrial hyperfusion. Plays a role in the maintenance and remodeling of mitochondrial cristae, some invaginations of the mitochondrial inner membrane that provide an increase in the surface area. Probably acts by forming helical filaments at the inside of inner membrane tubes with the shape and dimensions of crista junctions. The equilibrium between L-OPA1 and S-OPA1 influences cristae shape and morphology: increased L-OPA1 levels promote cristae stacking and elongated mitochondria, while increased S-OPA1 levels correlated with irregular cristae packing and round mitochondria shape. Functionally, isoforms that contain the alternative exon 4b are required for mitochondrial genome maintenance, possibly by anchoring the mitochondrial nucleoids to the inner mitochondrial membrane. The sequence is that of Dynamin-like GTPase OPA1, mitochondrial from Mus musculus (Mouse).